The primary structure comprises 228 residues: Demethylmenaquinone methyltransferase (228 aa).

S-adenosyl-L-methionine-binding positions include threonine 62, aspartate 80, 100 to 101 (DA), and serine 117.

This sequence belongs to the class I-like SAM-binding methyltransferase superfamily. MenG/UbiE family.

The enzyme catalyses a 2-demethylmenaquinol + S-adenosyl-L-methionine = a menaquinol + S-adenosyl-L-homocysteine + H(+). Its pathway is quinol/quinone metabolism; menaquinone biosynthesis; menaquinol from 1,4-dihydroxy-2-naphthoate: step 2/2. Its function is as follows. Methyltransferase required for the conversion of demethylmenaquinol (DMKH2) to menaquinol (MKH2). This Mycolicibacterium vanbaalenii (strain DSM 7251 / JCM 13017 / BCRC 16820 / KCTC 9966 / NRRL B-24157 / PYR-1) (Mycobacterium vanbaalenii) protein is Demethylmenaquinone methyltransferase.